The chain runs to 321 residues: Hydrolase 3 (321 aa).

The Involved in the stabilization of the negatively charged intermediate by the formation of the oxyanion hole motif lies at 80-82 (HGA). Residues serine 172 and aspartate 267 contribute to the active site.

The protein belongs to the 'GDXG' lipolytic enzyme family.

It carries out the reaction dihydroprecondylocarpine acetate + NADPH = (+)-vincadifformine + acetate + NADP(+). It participates in alkaloid biosynthesis. Component of the seco-iridoid and derivatives monoterpenoid indole alkaloids (MIAs, e.g. vincadifformine) biosynthesis pathway. Catalyzes the conversion of O-acetylstemmadenine (OAS) to vincadifformine. May also trigger the formation of additional unknown MIAs. The protein is Hydrolase 3 of Catharanthus roseus (Madagascar periwinkle).